Consider the following 496-residue polypeptide: UDP-N-acetylmuramoyl-L-alanyl-D-glutamate--2,6-diaminopimelate ligase (496 aa).

Leucine 29 and serine 31 together coordinate UDP-N-acetyl-alpha-D-muramoyl-L-alanyl-D-glutamate. Residue 118 to 124 participates in ATP binding; sequence GTNGKTT. UDP-N-acetyl-alpha-D-muramoyl-L-alanyl-D-glutamate-binding positions include asparagine 159, 160-161, serine 187, glutamine 193, and arginine 195; that span reads TT. Lysine 227 carries the N6-carboxylysine modification. Meso-2,6-diaminopimelate-binding positions include arginine 392, 416 to 419, glycine 467, and glutamate 471; that span reads DNPR. The Meso-diaminopimelate recognition motif signature appears at 416–419; the sequence is DNPR.

It belongs to the MurCDEF family. MurE subfamily. Mg(2+) is required as a cofactor. Carboxylation is probably crucial for Mg(2+) binding and, consequently, for the gamma-phosphate positioning of ATP.

It is found in the cytoplasm. The catalysed reaction is UDP-N-acetyl-alpha-D-muramoyl-L-alanyl-D-glutamate + meso-2,6-diaminopimelate + ATP = UDP-N-acetyl-alpha-D-muramoyl-L-alanyl-gamma-D-glutamyl-meso-2,6-diaminopimelate + ADP + phosphate + H(+). It participates in cell wall biogenesis; peptidoglycan biosynthesis. Catalyzes the addition of meso-diaminopimelic acid to the nucleotide precursor UDP-N-acetylmuramoyl-L-alanyl-D-glutamate (UMAG) in the biosynthesis of bacterial cell-wall peptidoglycan. This is UDP-N-acetylmuramoyl-L-alanyl-D-glutamate--2,6-diaminopimelate ligase from Wigglesworthia glossinidia brevipalpis.